A 158-amino-acid chain; its full sequence is Placenta growth factor (158 aa).

The or 26 signal peptide spans 1–23 (MLAMKLFTCFLQVLAGLAVHSQG). N-linked (GlcNAc...) asparagine glycans are attached at residues asparagine 29 and asparagine 30. 3 cysteine pairs are disulfide-bonded: cysteine 48-cysteine 90, cysteine 79-cysteine 125, and cysteine 83-cysteine 127. Asparagine 97 is a glycosylation site (N-linked (GlcNAc...) asparagine). Residues 136-158 (AERRKTKGKRKQSKTPQTEEPHL) form a disordered region. A compositionally biased stretch (basic residues) spans 137 to 148 (ERRKTKGKRKQS).

The protein belongs to the PDGF/VEGF growth factor family. Antiparallel homodimer; disulfide-linked. Also found as heterodimer with VEGFA/VEGF.

Its subcellular location is the secreted. Growth factor active in angiogenesis and endothelial cell growth, stimulating their proliferation and migration. It binds to the receptor FLT1/VEGFR-1. Also promotes cell tumor growth. The polypeptide is Placenta growth factor (Pgf) (Rattus norvegicus (Rat)).